The chain runs to 244 residues: 5-oxoprolinase subunit A (244 aa).

It belongs to the LamB/PxpA family. As to quaternary structure, forms a complex composed of PxpA, PxpB and PxpC.

The enzyme catalyses 5-oxo-L-proline + ATP + 2 H2O = L-glutamate + ADP + phosphate + H(+). In terms of biological role, catalyzes the cleavage of 5-oxoproline to form L-glutamate coupled to the hydrolysis of ATP to ADP and inorganic phosphate. The sequence is that of 5-oxoprolinase subunit A from Escherichia coli (strain SMS-3-5 / SECEC).